Reading from the N-terminus, the 336-residue chain is Glutamyl endopeptidase (336 aa).

Residues 1–29 form the signal peptide; that stretch reads MKGKFLKVSSLFVATLTTATLVSSPAANA. Positions 30–68 are excised as a propeptide; sequence LSSKAMDNHPQQTQSSKQQTPKIQKGGNLKPLEQREHAN. The tract at residues 34-61 is disordered; sequence AMDNHPQQTQSSKQQTPKIQKGGNLKPL. Low complexity predominate over residues 39 to 51; sequence PQQTQSSKQQTPK. Catalysis depends on charge relay system residues His-119, Asp-161, and Ser-237. Residues 283-336 are disordered; sequence FANDDQPNNPDNPDNPNNPDNPNNPDEPNNPDNPNNPDNPDNGDNNNSDNPDAA. Low complexity predominate over residues 286-336; sequence DDQPNNPDNPDNPNNPDNPNNPDEPNNPDNPNNPDNPDNGDNNNSDNPDAA. A run of 11 repeats spans residues 289–291, 292–294, 295–297, 298–300, 301–303, 304–306, 310–312, 313–315, 316–318, 319–321, and 322–324. The interval 289 to 324 is 11 X 3 AA repeats of P-[DN]-N; sequence PNNPDNPDNPNNPDNPNNPDEPNNPDNPNNPDNPDN.

Belongs to the peptidase S1B family. In terms of processing, proteolytically cleaved by aureolysin (aur). This cleavage leads to the activation of SspA.

The protein localises to the secreted. It catalyses the reaction Preferential cleavage: Glu-|-Xaa, Asp-|-Xaa.. Its function is as follows. Preferentially cleaves peptide bonds on the carboxyl-terminal side of aspartate and glutamate. Along with other extracellular proteases it is involved in colonization and infection of human tissues. Required for proteolytic maturation of thiol protease SspB and inactivation of SspC, an inhibitor of SspB. It is the most important protease for degradation of fibronectin-binding protein (FnBP) and surface protein A, which are involved in adherence to host cells. May also protect bacteria against host defense mechanism by cleaving the immunoglobulin classes IgG, IgA and IgM. May be involved in the stability of secreted lipases. This chain is Glutamyl endopeptidase (sspA), found in Staphylococcus aureus (strain NCTC 8325 / PS 47).